A 198-amino-acid polypeptide reads, in one-letter code: Probable chorismate pyruvate-lyase (198 aa).

The substrate site is built by Arg-76, Leu-114, and Glu-172.

Belongs to the UbiC family.

The protein localises to the cytoplasm. The catalysed reaction is chorismate = 4-hydroxybenzoate + pyruvate. Its pathway is cofactor biosynthesis; ubiquinone biosynthesis. Removes the pyruvyl group from chorismate, with concomitant aromatization of the ring, to provide 4-hydroxybenzoate (4HB) for the ubiquinone pathway. In Bordetella avium (strain 197N), this protein is Probable chorismate pyruvate-lyase.